The primary structure comprises 211 residues: Imidazole glycerol phosphate synthase subunit HisH (211 aa).

Residues 1 to 206 (MIGIIDYGRG…GKWVNEDATV (206 aa)) enclose the Glutamine amidotransferase type-1 domain. C79 functions as the Nucleophile in the catalytic mechanism. Active-site residues include H181 and E183.

As to quaternary structure, heterodimer of HisH and HisF.

The protein localises to the cytoplasm. The catalysed reaction is 5-[(5-phospho-1-deoxy-D-ribulos-1-ylimino)methylamino]-1-(5-phospho-beta-D-ribosyl)imidazole-4-carboxamide + L-glutamine = D-erythro-1-(imidazol-4-yl)glycerol 3-phosphate + 5-amino-1-(5-phospho-beta-D-ribosyl)imidazole-4-carboxamide + L-glutamate + H(+). It carries out the reaction L-glutamine + H2O = L-glutamate + NH4(+). The protein operates within amino-acid biosynthesis; L-histidine biosynthesis; L-histidine from 5-phospho-alpha-D-ribose 1-diphosphate: step 5/9. Functionally, IGPS catalyzes the conversion of PRFAR and glutamine to IGP, AICAR and glutamate. The HisH subunit catalyzes the hydrolysis of glutamine to glutamate and ammonia as part of the synthesis of IGP and AICAR. The resulting ammonia molecule is channeled to the active site of HisF. This Desulfitobacterium hafniense (strain Y51) protein is Imidazole glycerol phosphate synthase subunit HisH.